Consider the following 476-residue polypeptide: Glycogen synthase (476 aa).

Residue Lys15 coordinates ADP-alpha-D-glucose.

It belongs to the glycosyltransferase 1 family. Bacterial/plant glycogen synthase subfamily.

The catalysed reaction is [(1-&gt;4)-alpha-D-glucosyl](n) + ADP-alpha-D-glucose = [(1-&gt;4)-alpha-D-glucosyl](n+1) + ADP + H(+). It participates in glycan biosynthesis; glycogen biosynthesis. Functionally, synthesizes alpha-1,4-glucan chains using ADP-glucose. This is Glycogen synthase from Yersinia pseudotuberculosis serotype IB (strain PB1/+).